Consider the following 153-residue polypeptide: Regulatory protein RecX (153 aa).

This sequence belongs to the RecX family.

It localises to the cytoplasm. Functionally, modulates RecA activity. This chain is Regulatory protein RecX, found in Neisseria gonorrhoeae (strain ATCC 700825 / FA 1090).